Here is a 182-residue protein sequence, read N- to C-terminus: Translation initiation factor IF-3 (182 aa).

The protein belongs to the IF-3 family. Monomer.

It localises to the cytoplasm. In terms of biological role, IF-3 binds to the 30S ribosomal subunit and shifts the equilibrium between 70S ribosomes and their 50S and 30S subunits in favor of the free subunits, thus enhancing the availability of 30S subunits on which protein synthesis initiation begins. This Thermosynechococcus vestitus (strain NIES-2133 / IAM M-273 / BP-1) protein is Translation initiation factor IF-3.